The primary structure comprises 150 residues: MEKKIAVTAGTFDLLHPGHFNTLNFAKKHADELVVIIARDETVKKIKGRSPVIPEEQRKVMIEALKPVDRAVLGSLTNKLEPILEIRPDVIILGPDQTTYQINELKSQLAKHFLYPEILKVEEYVKCPFHSSYDILKEIVRRWCCKELKV.

ATP is bound by residues 11-12 (TF), 16-19 (HPGH), D96, and Y124.

This sequence belongs to the archaeal FAD synthase family. Homodimer. A divalent metal cation serves as cofactor.

The enzyme catalyses FMN + ATP + H(+) = FAD + diphosphate. It functions in the pathway cofactor biosynthesis; FAD biosynthesis; FAD from FMN: step 1/1. Functionally, catalyzes the transfer of the AMP portion of ATP to flavin mononucleotide (FMN) to produce flavin adenine dinucleotide (FAD) coenzyme. This Methanococcus maripaludis (strain C5 / ATCC BAA-1333) protein is FAD synthase.